The sequence spans 353 residues: Photosystem II D2 protein (353 aa).

Thr2 carries the N-acetylthreonine modification. Thr2 carries the post-translational modification Phosphothreonine. A helical membrane pass occupies residues 41 to 61; sequence CAYFALGGWFTGTTFVTSWYT. His118 serves as a coordination point for chlorophyll a. A helical membrane pass occupies residues 125–141; it reads GFMLRQFELARSVQLRP. Residues Gln130 and Asn143 each coordinate pheophytin a. Residues 153 to 166 form a helical membrane-spanning segment; that stretch reads VFVSVFLIYPLGQS. His198 contacts chlorophyll a. The helical transmembrane segment at 208-228 threads the bilayer; sequence AALLCAIHGATVENTLFEDGD. His215 and Phe262 together coordinate a plastoquinone. His215 contributes to the Fe cation binding site. A Fe cation-binding site is contributed by His269. Residues 279-295 traverse the membrane as a helical segment; it reads GLWMSAIGVVGLALNLR.

The protein belongs to the reaction center PufL/M/PsbA/D family. In terms of assembly, PSII is composed of 1 copy each of membrane proteins PsbA, PsbB, PsbC, PsbD, PsbE, PsbF, PsbH, PsbI, PsbJ, PsbK, PsbL, PsbM, PsbT, PsbX, PsbY, PsbZ, Psb30/Ycf12, at least 3 peripheral proteins of the oxygen-evolving complex and a large number of cofactors. It forms dimeric complexes. The D1/D2 heterodimer binds P680, chlorophylls that are the primary electron donor of PSII, and subsequent electron acceptors. It shares a non-heme iron and each subunit binds pheophytin, quinone, additional chlorophylls, carotenoids and lipids. There is also a Cl(-1) ion associated with D1 and D2, which is required for oxygen evolution. The PSII complex binds additional chlorophylls, carotenoids and specific lipids. serves as cofactor.

The protein localises to the plastid. It is found in the chloroplast thylakoid membrane. The enzyme catalyses 2 a plastoquinone + 4 hnu + 2 H2O = 2 a plastoquinol + O2. Photosystem II (PSII) is a light-driven water:plastoquinone oxidoreductase that uses light energy to abstract electrons from H(2)O, generating O(2) and a proton gradient subsequently used for ATP formation. It consists of a core antenna complex that captures photons, and an electron transfer chain that converts photonic excitation into a charge separation. The D1/D2 (PsbA/PsbD) reaction center heterodimer binds P680, the primary electron donor of PSII as well as several subsequent electron acceptors. D2 is needed for assembly of a stable PSII complex. This chain is Photosystem II D2 protein, found in Liriodendron tulipifera (Tuliptree).